A 555-amino-acid chain; its full sequence is Glucosylglycerate phosphorylase (555 aa).

Aspartate 231 (nucleophile) is an active-site residue.

Belongs to the glycosyl hydrolase 13 family. Glucosylglycerate phosphorylase subfamily.

The enzyme catalyses (2R)-2-O-(alpha-D-glucopyranosyl)-glycerate + phosphate = (R)-glycerate + alpha-D-glucose 1-phosphate. Catalyzes the reversible phosphorolysis of glucosylglycerate into alpha-D-glucose 1-phosphate (Glc1P) and D-glycerate. May be a regulator of intracellular levels of glucosylglycerate, a compatible solute that primarily protects organisms facing salt stress and very specific nutritional constraints. Has a very strict substrate specificity. Cannot catalyze the phosphorolysis of sucrose or synthesize sucrose from Glc1P and D-fructose. The polypeptide is Glucosylglycerate phosphorylase (Allomeiothermus silvanus (strain ATCC 700542 / DSM 9946 / NBRC 106475 / NCIMB 13440 / VI-R2) (Thermus silvanus)).